The sequence spans 253 residues: 5-oxoprolinase subunit A (253 aa).

This sequence belongs to the LamB/PxpA family. In terms of assembly, forms a complex composed of PxpA, PxpB and PxpC.

It catalyses the reaction 5-oxo-L-proline + ATP + 2 H2O = L-glutamate + ADP + phosphate + H(+). In terms of biological role, catalyzes the cleavage of 5-oxoproline to form L-glutamate coupled to the hydrolysis of ATP to ADP and inorganic phosphate. The sequence is that of 5-oxoprolinase subunit A from Azorhizobium caulinodans (strain ATCC 43989 / DSM 5975 / JCM 20966 / LMG 6465 / NBRC 14845 / NCIMB 13405 / ORS 571).